Reading from the N-terminus, the 84-residue chain is Small ribosomal subunit protein bS20 (84 aa).

Positions 1–25 (MANIVSNEKTYRHTQKVRKENHAKM) are disordered.

This sequence belongs to the bacterial ribosomal protein bS20 family.

Functionally, binds directly to 16S ribosomal RNA. This Ureaplasma urealyticum serovar 10 (strain ATCC 33699 / Western) protein is Small ribosomal subunit protein bS20.